The chain runs to 61 residues: UPF0434 protein PSPPH_1629 (61 aa).

This sequence belongs to the UPF0434 family.

The sequence is that of UPF0434 protein PSPPH_1629 from Pseudomonas savastanoi pv. phaseolicola (strain 1448A / Race 6) (Pseudomonas syringae pv. phaseolicola (strain 1448A / Race 6)).